A 174-amino-acid chain; its full sequence is Large ribosomal subunit protein uL16 (174 aa).

The protein belongs to the universal ribosomal protein uL16 family.

The chain is Large ribosomal subunit protein uL16 from Staphylothermus marinus (strain ATCC 43588 / DSM 3639 / JCM 9404 / F1).